Reading from the N-terminus, the 348-residue chain is Flap endonuclease 1 (348 aa).

Residues 1–98 (MGLAELRELI…ETLERRRERK (98 aa)) are N-domain. 7 residues coordinate Mg(2+): Asp-28, Asp-80, Glu-149, Glu-151, Asp-170, Asp-172, and Asp-234. The I-domain stretch occupies residues 113-256 (EREKYARQVA…RALQLIRKYG (144 aa)). The interval 340 to 348 (RQETLDAFF) is interaction with PCNA.

Belongs to the XPG/RAD2 endonuclease family. FEN1 subfamily. Interacts with PCNA. PCNA stimulates the nuclease activity without altering cleavage specificity. It depends on Mg(2+) as a cofactor.

Structure-specific nuclease with 5'-flap endonuclease and 5'-3' exonuclease activities involved in DNA replication and repair. During DNA replication, cleaves the 5'-overhanging flap structure that is generated by displacement synthesis when DNA polymerase encounters the 5'-end of a downstream Okazaki fragment. Binds the unpaired 3'-DNA end and kinks the DNA to facilitate 5' cleavage specificity. Cleaves one nucleotide into the double-stranded DNA from the junction in flap DNA, leaving a nick for ligation. Also involved in the base excision repair (BER) pathway. Acts as a genome stabilization factor that prevents flaps from equilibrating into structures that lead to duplications and deletions. Also possesses 5'-3' exonuclease activity on nicked or gapped double-stranded DNA. In Methanopyrus kandleri (strain AV19 / DSM 6324 / JCM 9639 / NBRC 100938), this protein is Flap endonuclease 1.